A 391-amino-acid polypeptide reads, in one-letter code: Dual-specificity RNA methyltransferase RlmN (391 aa).

The Proton acceptor role is filled by Glu-112. A Radical SAM core domain is found at 118-368 (ESDRGTLCIS…VRTPRGRDIL (251 aa)). Cys-125 and Cys-371 are disulfide-bonded. Residues Cys-132, Cys-136, and Cys-139 each contribute to the [4Fe-4S] cluster site. Residues 197–198 (GE), Ser-229, 251–253 (SLH), and Asn-328 contribute to the S-adenosyl-L-methionine site. Catalysis depends on Cys-371, which acts as the S-methylcysteine intermediate.

It belongs to the radical SAM superfamily. RlmN family. It depends on [4Fe-4S] cluster as a cofactor.

The protein resides in the cytoplasm. The catalysed reaction is adenosine(2503) in 23S rRNA + 2 reduced [2Fe-2S]-[ferredoxin] + 2 S-adenosyl-L-methionine = 2-methyladenosine(2503) in 23S rRNA + 5'-deoxyadenosine + L-methionine + 2 oxidized [2Fe-2S]-[ferredoxin] + S-adenosyl-L-homocysteine. It catalyses the reaction adenosine(37) in tRNA + 2 reduced [2Fe-2S]-[ferredoxin] + 2 S-adenosyl-L-methionine = 2-methyladenosine(37) in tRNA + 5'-deoxyadenosine + L-methionine + 2 oxidized [2Fe-2S]-[ferredoxin] + S-adenosyl-L-homocysteine. Functionally, specifically methylates position 2 of adenine 2503 in 23S rRNA and position 2 of adenine 37 in tRNAs. m2A2503 modification seems to play a crucial role in the proofreading step occurring at the peptidyl transferase center and thus would serve to optimize ribosomal fidelity. This Beijerinckia indica subsp. indica (strain ATCC 9039 / DSM 1715 / NCIMB 8712) protein is Dual-specificity RNA methyltransferase RlmN.